Consider the following 556-residue polypeptide: Glutamine--tRNA ligase (556 aa).

The 'HIGH' region motif lies at 34–44 (PEPNGYLHIGH). ATP-binding positions include 35 to 37 (EPN) and 41 to 47 (HIGHAKS). 2 residues coordinate L-glutamine: D67 and Y212. ATP is bound by residues T231, 261–262 (RL), and 269–271 (MSK). Residues 268–272 (VMSKR) carry the 'KMSKS' region motif.

It belongs to the class-I aminoacyl-tRNA synthetase family. Monomer.

It is found in the cytoplasm. It catalyses the reaction tRNA(Gln) + L-glutamine + ATP = L-glutaminyl-tRNA(Gln) + AMP + diphosphate. This Vibrio parahaemolyticus serotype O3:K6 (strain RIMD 2210633) protein is Glutamine--tRNA ligase.